Reading from the N-terminus, the 140-residue chain is UPF0132 membrane protein MJ1527 (140 aa).

A run of 3 helical transmembrane segments spans residues 40–60, 70–90, and 92–112; these read MEGV…LLLE, AMQS…VSAI, and IIGW…WIVG.

The protein belongs to the UPF0132 family.

It is found in the cell membrane. This Methanocaldococcus jannaschii (strain ATCC 43067 / DSM 2661 / JAL-1 / JCM 10045 / NBRC 100440) (Methanococcus jannaschii) protein is UPF0132 membrane protein MJ1527.